A 165-amino-acid polypeptide reads, in one-letter code: Xanthine-guanine phosphoribosyltransferase (165 aa).

5-phospho-alpha-D-ribose 1-diphosphate contacts are provided by residues 41 to 42 (RG) and 98 to 106 (DDLTDTGKT). Position 99 (Asp-99) interacts with Mg(2+). Residues Asp-102 and Ile-145 each coordinate guanine. Xanthine is bound by residues Asp-102 and Ile-145. GMP is bound by residues 102–106 (DTGKT) and 144–145 (WI).

This sequence belongs to the purine/pyrimidine phosphoribosyltransferase family. XGPT subfamily. In terms of assembly, homotetramer. Mg(2+) is required as a cofactor.

The protein localises to the cell inner membrane. The enzyme catalyses GMP + diphosphate = guanine + 5-phospho-alpha-D-ribose 1-diphosphate. The catalysed reaction is XMP + diphosphate = xanthine + 5-phospho-alpha-D-ribose 1-diphosphate. It catalyses the reaction IMP + diphosphate = hypoxanthine + 5-phospho-alpha-D-ribose 1-diphosphate. It functions in the pathway purine metabolism; GMP biosynthesis via salvage pathway; GMP from guanine: step 1/1. The protein operates within purine metabolism; XMP biosynthesis via salvage pathway; XMP from xanthine: step 1/1. Purine salvage pathway enzyme that catalyzes the transfer of the ribosyl-5-phosphate group from 5-phospho-alpha-D-ribose 1-diphosphate (PRPP) to the N9 position of the 6-oxopurines guanine and xanthine to form the corresponding ribonucleotides GMP (guanosine 5'-monophosphate) and XMP (xanthosine 5'-monophosphate), with the release of PPi. To a lesser extent, also acts on hypoxanthine. This chain is Xanthine-guanine phosphoribosyltransferase, found in Brucella canis (strain ATCC 23365 / NCTC 10854 / RM-666).